The primary structure comprises 245 residues: 5'-nucleotidase SurE (245 aa).

A divalent metal cation is bound by residues D8, D9, S39, and N91.

Belongs to the SurE nucleotidase family. The cofactor is a divalent metal cation.

Its subcellular location is the cytoplasm. It catalyses the reaction a ribonucleoside 5'-phosphate + H2O = a ribonucleoside + phosphate. Its function is as follows. Nucleotidase that shows phosphatase activity on nucleoside 5'-monophosphates. The protein is 5'-nucleotidase SurE of Janthinobacterium sp. (strain Marseille) (Minibacterium massiliensis).